A 152-amino-acid polypeptide reads, in one-letter code: Arginine repressor (152 aa).

Belongs to the ArgR family.

Its subcellular location is the cytoplasm. It participates in amino-acid biosynthesis; L-arginine biosynthesis [regulation]. Functionally, regulates arginine biosynthesis genes. This Caldicellulosiruptor saccharolyticus (strain ATCC 43494 / DSM 8903 / Tp8T 6331) protein is Arginine repressor.